Consider the following 239-residue polypeptide: Sensory rhodopsin-2 (239 aa).

Residues 1 to 3 (MVG) are Extracellular-facing. A helical transmembrane segment spans residues 4-25 (LTTLFWLGAIGMLVGTLAFAWA). The Cytoplasmic segment spans residues 26 to 33 (GRDAGSGE). A helical membrane pass occupies residues 34–55 (RRYYVTLVGISGIAAVAYVVMA). Residues 56-69 (LGVGWVPVAERTVF) lie on the Extracellular side of the membrane. A helical transmembrane segment spans residues 70–91 (APRYIDWILTTPLIVYFLGLLA). Over 92–94 (GLD) the chain is Cytoplasmic. Residues 95 to 117 (SREFGIVITLNTVVMLAGFAGAM) form a helical membrane-spanning segment. The Extracellular segment spans residues 118 to 121 (VPGI). The chain crosses the membrane as a helical span at residues 122-149 (ERYALFGMGAVAFLGLVYYLVGPMTESA). Residues 150 to 153 (SQRS) lie on the Cytoplasmic side of the membrane. Residues 154–181 (SGIKSLYVRLRNLTVILWAIYPFIWLLG) form a helical membrane-spanning segment. At 182–189 (PPGVALLT) the chain is on the extracellular side. A helical membrane pass occupies residues 190–222 (PTVDVALIVYLDLVTKVGFGFIALDAAATLRAE). Lys-205 carries the N6-(retinylidene)lysine modification. At 223–239 (HGESLAGVDTDAPAVAD) the chain is on the cytoplasmic side.

It belongs to the archaeal/bacterial/fungal opsin family. In terms of assembly, homodimer. Interacts with HTR-II.

It localises to the cell membrane. Functionally, photophobic photoreceptor responsible for the negative phototaxis. Activates the sensory rhodopsin II transducer (HTR-II) in response to blue light. The protein is Sensory rhodopsin-2 (sop2) of Natronomonas pharaonis (Natronobacterium pharaonis).